Reading from the N-terminus, the 395-residue chain is ATP phosphoribosyltransferase regulatory subunit (395 aa).

This sequence belongs to the class-II aminoacyl-tRNA synthetase family. HisZ subfamily. As to quaternary structure, heteromultimer composed of HisG and HisZ subunits.

Its subcellular location is the cytoplasm. It participates in amino-acid biosynthesis; L-histidine biosynthesis; L-histidine from 5-phospho-alpha-D-ribose 1-diphosphate: step 1/9. Its function is as follows. Required for the first step of histidine biosynthesis. May allow the feedback regulation of ATP phosphoribosyltransferase activity by histidine. This Ectopseudomonas mendocina (strain ymp) (Pseudomonas mendocina) protein is ATP phosphoribosyltransferase regulatory subunit.